We begin with the raw amino-acid sequence, 99 residues long: Large ribosomal subunit protein uL23 (99 aa).

It belongs to the universal ribosomal protein uL23 family. In terms of assembly, part of the 50S ribosomal subunit. Contacts protein L29, and trigger factor when it is bound to the ribosome.

In terms of biological role, one of the early assembly proteins it binds 23S rRNA. One of the proteins that surrounds the polypeptide exit tunnel on the outside of the ribosome. Forms the main docking site for trigger factor binding to the ribosome. This is Large ribosomal subunit protein uL23 from Lachnoclostridium phytofermentans (strain ATCC 700394 / DSM 18823 / ISDg) (Clostridium phytofermentans).